Here is a 391-residue protein sequence, read N- to C-terminus: Succinyl-diaminopimelate desuccinylase (391 aa).

His74 serves as a coordination point for Zn(2+). The active site involves Asp76. Asp107 is a binding site for Zn(2+). Glu141 acts as the Proton acceptor in catalysis. Zn(2+) contacts are provided by Glu142, Glu170, and His360.

Belongs to the peptidase M20A family. DapE subfamily. Homodimer. It depends on Zn(2+) as a cofactor. Co(2+) serves as cofactor.

It carries out the reaction N-succinyl-(2S,6S)-2,6-diaminopimelate + H2O = (2S,6S)-2,6-diaminopimelate + succinate. It functions in the pathway amino-acid biosynthesis; L-lysine biosynthesis via DAP pathway; LL-2,6-diaminopimelate from (S)-tetrahydrodipicolinate (succinylase route): step 3/3. In terms of biological role, catalyzes the hydrolysis of N-succinyl-L,L-diaminopimelic acid (SDAP), forming succinate and LL-2,6-diaminopimelate (DAP), an intermediate involved in the bacterial biosynthesis of lysine and meso-diaminopimelic acid, an essential component of bacterial cell walls. The protein is Succinyl-diaminopimelate desuccinylase of Variovorax paradoxus (strain S110).